The following is a 239-amino-acid chain: Tetraspanin-9 (239 aa).

Over Met1–Met13 the chain is Cytoplasmic. Residues Phe14–Leu34 traverse the membrane as a helical segment. The Extracellular portion of the chain corresponds to Ser35–Asn55. The chain crosses the membrane as a helical span at residues Leu56 to Ile76. Residues Lys77–Ser85 are Cytoplasmic-facing. The helical transmembrane segment at Phe86 to Val106 threads the bilayer. The Extracellular portion of the chain corresponds to Tyr107–His203. Asn180 carries an N-linked (GlcNAc...) asparagine glycan. The chain crosses the membrane as a helical span at residues Val204 to Met224. Over Thr225 to Ala239 the chain is Cytoplasmic.

Belongs to the tetraspanin (TM4SF) family.

The protein localises to the membrane. The chain is Tetraspanin-9 (tspan9) from Xenopus laevis (African clawed frog).